The sequence spans 151 residues: Large ribosomal subunit protein uL13 (151 aa).

Positions 126–151 are disordered; sequence YPGPNHPHQAQKPEELTLNTIPNGDK. A compositionally biased stretch (polar residues) spans 142–151; that stretch reads TLNTIPNGDK.

The protein belongs to the universal ribosomal protein uL13 family. In terms of assembly, part of the 50S ribosomal subunit.

This protein is one of the early assembly proteins of the 50S ribosomal subunit, although it is not seen to bind rRNA by itself. It is important during the early stages of 50S assembly. The polypeptide is Large ribosomal subunit protein uL13 (Crocosphaera subtropica (strain ATCC 51142 / BH68) (Cyanothece sp. (strain ATCC 51142))).